We begin with the raw amino-acid sequence, 312 residues long: Probable cell division protein WhiA (312 aa).

The segment at residues Ser-274–Gln-308 is a DNA-binding region (H-T-H motif).

The protein belongs to the WhiA family.

In terms of biological role, involved in cell division and chromosome segregation. This chain is Probable cell division protein WhiA, found in Limosilactobacillus fermentum (strain NBRC 3956 / LMG 18251) (Lactobacillus fermentum).